We begin with the raw amino-acid sequence, 161 residues long: Nucleotide-binding protein Rfer_2692 (161 aa).

It belongs to the YajQ family.

In terms of biological role, nucleotide-binding protein. This chain is Nucleotide-binding protein Rfer_2692, found in Albidiferax ferrireducens (strain ATCC BAA-621 / DSM 15236 / T118) (Rhodoferax ferrireducens).